Here is a 1159-residue protein sequence, read N- to C-terminus: DNA-directed RNA polymerase subunit beta' (1159 aa).

Mg(2+) is bound by residues Asp-398, Asp-400, and Asp-402. Cys-741, Cys-815, Cys-822, and Cys-825 together coordinate Zn(2+).

The protein belongs to the RNA polymerase beta' chain family. The RNAP catalytic core consists of 2 alpha, 1 beta, 1 beta' and 1 omega subunit. When a sigma factor is associated with the core the holoenzyme is formed, which can initiate transcription. Mg(2+) is required as a cofactor. The cofactor is Zn(2+).

The enzyme catalyses RNA(n) + a ribonucleoside 5'-triphosphate = RNA(n+1) + diphosphate. Its function is as follows. DNA-dependent RNA polymerase catalyzes the transcription of DNA into RNA using the four ribonucleoside triphosphates as substrates. The chain is DNA-directed RNA polymerase subunit beta' from Porphyromonas cangingivalis.